A 204-amino-acid chain; its full sequence is MDNYSLLSTPRPRISSSALSAFPDIMSSLATSLPDLGDTQNGEQLRRNCTIYRPWFSPYSYFVCTDKESHLEAYGFPEVDREEGRGDNCLLEDVAESVCSSSSSQENTYPREANRKSKHGLDSITSQDILMASKWHPAQQNGYKCASCCRMYPTLHSLKSHIKGGFKEGFSCKVYYRKLKTLWGKEQKARTGDRISLGSCQAFK.

A disordered region spans residues Ser101 to Gly120.

In terms of tissue distribution, testis-specific.

The protein resides in the nucleus membrane. In terms of biological role, plays a role in spermiogenesis and fertilization. This Mus musculus (Mouse) protein is Spermatogenesis-associated protein 46 (Spata46).